Reading from the N-terminus, the 255-residue chain is MDRLVIGGRELKNRLFIGSGKFADERVIRDIVAQTGVEVVTVALRRVSLSGDGENILHCIPKECVLLPNTSGARTAEEAIRIARLARAAGCGNWVKIEVISDNKYLLPDNNETIKATGVLAEEGFVVLPYMHPDLYAAKELERAGAAAVMPLGAPIGTNRGLKTKEIVRILIEECSVPVIVDAGIGKPSEAAEAMEMGAAACLVNTAIATAGDPLVMARAFSQAVAAGRLAYLAQPGERTEYARASSPLTGFLGS.

Lys-96 acts as the Schiff-base intermediate with DXP in catalysis. 1-deoxy-D-xylulose 5-phosphate-binding positions include Gly-157, 183–184 (AG), and 205–206 (NT).

Belongs to the ThiG family. Homotetramer. Forms heterodimers with either ThiH or ThiS.

It localises to the cytoplasm. The enzyme catalyses [ThiS sulfur-carrier protein]-C-terminal-Gly-aminoethanethioate + 2-iminoacetate + 1-deoxy-D-xylulose 5-phosphate = [ThiS sulfur-carrier protein]-C-terminal Gly-Gly + 2-[(2R,5Z)-2-carboxy-4-methylthiazol-5(2H)-ylidene]ethyl phosphate + 2 H2O + H(+). It functions in the pathway cofactor biosynthesis; thiamine diphosphate biosynthesis. Catalyzes the rearrangement of 1-deoxy-D-xylulose 5-phosphate (DXP) to produce the thiazole phosphate moiety of thiamine. Sulfur is provided by the thiocarboxylate moiety of the carrier protein ThiS. In vitro, sulfur can be provided by H(2)S. The polypeptide is Thiazole synthase (Heliobacterium modesticaldum (strain ATCC 51547 / Ice1)).